A 416-amino-acid chain; its full sequence is 2,3-bisphosphoglycerate-independent phosphoglycerate mutase (416 aa).

Belongs to the BPG-independent phosphoglycerate mutase family. A-PGAM subfamily.

It catalyses the reaction (2R)-2-phosphoglycerate = (2R)-3-phosphoglycerate. The protein operates within carbohydrate degradation; glycolysis; pyruvate from D-glyceraldehyde 3-phosphate: step 3/5. Functionally, catalyzes the interconversion of 2-phosphoglycerate and 3-phosphoglycerate. The protein is 2,3-bisphosphoglycerate-independent phosphoglycerate mutase of Ignicoccus hospitalis (strain KIN4/I / DSM 18386 / JCM 14125).